The chain runs to 1008 residues: SKI family transcriptional corepressor 2 (1008 aa).

2 disordered regions span residues 280–315 (HLLG…DDDD) and 514–927 (EPGG…KKDV). 2 stretches are compositionally biased toward pro residues: residues 284-294 (APPPPPPPPPL) and 525-534 (APPPGQPPPV). 2 stretches are compositionally biased toward low complexity: residues 535–544 (VANGPGSGPP) and 578–595 (GVTS…SVGT). A compositionally biased stretch (basic and acidic residues) spans 626–635 (GGKDDAESLA). A compositionally biased stretch (basic residues) spans 649 to 666 (PAHHHHHHHHPHHHHHHP). Pro residues predominate over residues 691 to 703 (APPPPPPPPPLAP). Acidic residues-rich tracts occupy residues 724 to 739 (DSSE…QEVD) and 748 to 766 (GEEE…EDEE). Residues 787 to 797 (LSEKGSGRDRT) show a composition bias toward basic and acidic residues. Positions 842 to 855 (SSSGGSRPGSPVHH) are enriched in low complexity. Basic and acidic residues-rich tracts occupy residues 856 to 872 (PSLE…KPKE), 880 to 890 (TKDDNFSDKNK), and 905 to 915 (FWRERSGEHTQ).

This sequence belongs to the SKI family. As to quaternary structure, interacts with SMAD2 and SMAD3. As to expression, expression is restricted to adult and embryonic central nervous system. Expressed at high levels in the developing cerebellum, ventral metencephalon and myelencephalon at 12.5 dpc (at protein level). In the adult cerebellum, expressed specifically in Purkinje cells.

The protein resides in the nucleus. It localises to the cytoplasm. Acts as a TGF-beta antagonist in the nervous system. Exhibits transcriptional repressor activity. This Mus musculus (Mouse) protein is SKI family transcriptional corepressor 2.